Here is a 336-residue protein sequence, read N- to C-terminus: tRNA(Ile)-lysidine synthase (336 aa).

40–45 (SGGQDS) contacts ATP.

It belongs to the tRNA(Ile)-lysidine synthase family.

It localises to the cytoplasm. The catalysed reaction is cytidine(34) in tRNA(Ile2) + L-lysine + ATP = lysidine(34) in tRNA(Ile2) + AMP + diphosphate + H(+). In terms of biological role, ligates lysine onto the cytidine present at position 34 of the AUA codon-specific tRNA(Ile) that contains the anticodon CAU, in an ATP-dependent manner. Cytidine is converted to lysidine, thus changing the amino acid specificity of the tRNA from methionine to isoleucine. This is tRNA(Ile)-lysidine synthase from Prochlorococcus marinus subsp. pastoris (strain CCMP1986 / NIES-2087 / MED4).